The primary structure comprises 126 residues: Small ribosomal subunit protein eS6 (126 aa).

The protein belongs to the eukaryotic ribosomal protein eS6 family.

This is Small ribosomal subunit protein eS6 from Methanothermobacter thermautotrophicus (strain ATCC 29096 / DSM 1053 / JCM 10044 / NBRC 100330 / Delta H) (Methanobacterium thermoautotrophicum).